Reading from the N-terminus, the 589-residue chain is Transmembrane 9 superfamily member 1 (589 aa).

A signal peptide spans Met1–Gly27. A glycan (N-linked (GlcNAc...) asparagine) is linked at Asn178. Helical transmembrane passes span Leu237–Leu257, Val310–Leu330, Gly339–Val359, and Val373–Val393. Asn401 is a glycosylation site (N-linked (GlcNAc...) asparagine). Transmembrane regions (helical) follow at residues Ile412–Ile432, Gly482–Leu502, and Ser518–Ala538. Residue Asn542 is glycosylated (N-linked (GlcNAc...) asparagine). The chain crosses the membrane as a helical span at residues Phe552 to Phe572.

Belongs to the nonaspanin (TM9SF) (TC 9.A.2) family.

It localises to the lysosome membrane. It is found in the cytoplasmic vesicle. The protein resides in the autophagosome membrane. Its function is as follows. Plays an essential role in autophagy. This chain is Transmembrane 9 superfamily member 1 (Tm9sf1), found in Rattus norvegicus (Rat).